The primary structure comprises 387 residues: Natterin-4 (387 aa).

Residues 1 to 18 (MKLLVLLVTLLVLSWTSA) form the signal peptide. Residues 19–46 (EDVGDQEILQQHNEDNNHKSELGEAAPQ) constitute a propeptide that is removed on maturation. The span at 31–40 (NEDNNHKSEL) shows a compositional bias: basic and acidic residues. The segment at 31–57 (NEDNNHKSELGEAAPQRTDNETSQLGQ) is disordered.

Belongs to the natterin family. Contains 4 disulfide bonds. Expressed by the venom gland.

The protein resides in the secreted. Inhibited by tissue-kallikrein inhibitor TKI and trasylol. Plasma kallikrein inhibitor PKSI527 and classical inhibitors of serine-, metallo-, thiol- or aspartate-peptidases evokes a minor inhibition of the peptide digestion. In terms of biological role, shows nociceptive, edema-inducing and kininogenase activity with release of kallidin from low molecular weight kininogen. The cleavage occurs at Met-Lys bonds. The polypeptide is Natterin-4 (Thalassophryne nattereri (Copper Joe toadfish)).